The primary structure comprises 379 residues: Cytochrome b (379 aa).

4 consecutive transmembrane segments (helical) span residues 34-54 (LGSL…FLTM), 78-99 (WLIR…YLHV), 114-134 (WMTG…GYVL), and 179-199 (FYTF…IHLF). The heme b site is built by histidine 84 and histidine 98. Residues histidine 183 and histidine 197 each coordinate heme b. Histidine 202 contributes to the a ubiquinone binding site. A run of 4 helical transmembrane segments spans residues 227 to 247 (YKDM…CLID), 289 to 309 (LGGV…PFYN), 321 to 341 (MNQI…WIGK), and 348 to 368 (YIMT…FNVH).

Belongs to the cytochrome b family. As to quaternary structure, the main subunits of complex b-c1 are: cytochrome b, cytochrome c1 and the Rieske protein. Heme b serves as cofactor.

The protein resides in the mitochondrion inner membrane. In terms of biological role, component of the ubiquinol-cytochrome c reductase complex (complex III or cytochrome b-c1 complex) that is part of the mitochondrial respiratory chain. The b-c1 complex mediates electron transfer from ubiquinol to cytochrome c. Contributes to the generation of a proton gradient across the mitochondrial membrane that is then used for ATP synthesis. This chain is Cytochrome b (MT-CYB), found in Locusta migratoria (Migratory locust).